The primary structure comprises 78 residues: UPF0291 protein MCCL_0996 (78 aa).

Belongs to the UPF0291 family.

The protein resides in the cytoplasm. The chain is UPF0291 protein MCCL_0996 from Macrococcus caseolyticus (strain JCSC5402) (Macrococcoides caseolyticum).